The chain runs to 196 residues: Ribosomal RNA large subunit methyltransferase E (196 aa).

5 residues coordinate S-adenosyl-L-methionine: Gly-52, Trp-54, Asp-72, Asp-88, and Asp-111. The Proton acceptor role is filled by Lys-151.

This sequence belongs to the class I-like SAM-binding methyltransferase superfamily. RNA methyltransferase RlmE family.

The protein resides in the cytoplasm. The enzyme catalyses uridine(2552) in 23S rRNA + S-adenosyl-L-methionine = 2'-O-methyluridine(2552) in 23S rRNA + S-adenosyl-L-homocysteine + H(+). In terms of biological role, specifically methylates the uridine in position 2552 of 23S rRNA at the 2'-O position of the ribose in the fully assembled 50S ribosomal subunit. The sequence is that of Ribosomal RNA large subunit methyltransferase E from Cenarchaeum symbiosum (strain A).